We begin with the raw amino-acid sequence, 71 residues long: Large ribosomal subunit protein bL31 (71 aa).

Positions 16, 18, 37, and 40 each coordinate Zn(2+).

This sequence belongs to the bacterial ribosomal protein bL31 family. Type A subfamily. Part of the 50S ribosomal subunit. Zn(2+) is required as a cofactor.

Binds the 23S rRNA. The protein is Large ribosomal subunit protein bL31 of Mannheimia succiniciproducens (strain KCTC 0769BP / MBEL55E).